We begin with the raw amino-acid sequence, 301 residues long: Mitochondrial carnitine/acylcarnitine carrier protein (301 aa).

Ala-2 carries the post-translational modification N-acetylalanine. Residues Ala-2 to Lys-12 are Cytoplasmic-facing. Solcar repeat units lie at residues Ile-8–Leu-99, Leu-108–Ile-196, and Leu-207–Phe-293. The helical transmembrane segment at Asn-13–Leu-31 threads the bilayer. Residues Asp-32–Arg-73 lie on the Mitochondrial matrix side of the membrane. The chain crosses the membrane as a helical span at residues Gly-74–Phe-93. Topologically, residues Gly-94 to Gln-112 are cytoplasmic. A helical transmembrane segment spans residues Leu-113–Gly-131. At Glu-132–Lys-170 the chain is on the mitochondrial matrix side. 2 positions are modified to N6-acetyllysine: Lys-148 and Lys-157. Lys-170 is modified (N6-acetyllysine; alternate). N6-succinyllysine; alternate is present on Lys-170. Residues Gly-171–Tyr-190 traverse the membrane as a helical segment. Residues Glu-191–Arg-211 lie on the Cytoplasmic side of the membrane. The helical transmembrane segment at Ile-212–Pro-230 threads the bilayer. The Mitochondrial matrix segment spans residues Asp-231 to Lys-267. Residues Gly-268–Phe-287 form a helical membrane-spanning segment. Residues Glu-288–Leu-301 are Cytoplasmic-facing.

Belongs to the mitochondrial carrier (TC 2.A.29) family.

It is found in the mitochondrion inner membrane. The catalysed reaction is O-acetyl-(R)-carnitine(in) + (R)-carnitine(out) = O-acetyl-(R)-carnitine(out) + (R)-carnitine(in). The enzyme catalyses an O-acyl-(R)-carnitine(in) + (R)-carnitine(out) = an O-acyl-(R)-carnitine(out) + (R)-carnitine(in). It carries out the reaction O-propanoyl-(R)-carnitine(in) + (R)-carnitine(out) = O-propanoyl-(R)-carnitine(out) + (R)-carnitine(in). It catalyses the reaction O-hexadecanoyl-(R)-carnitine(in) + (R)-carnitine(out) = O-hexadecanoyl-(R)-carnitine(out) + (R)-carnitine(in). The catalysed reaction is O-octanoyl-(R)-carnitine(in) + (R)-carnitine(out) = O-octanoyl-(R)-carnitine(out) + (R)-carnitine(in). The enzyme catalyses (R)-carnitine(in) = (R)-carnitine(out). Its function is as follows. Mediates the electroneutral exchange of acylcarnitines (O-acyl-(R)-carnitine or L-acylcarnitine) of different acyl chain lengths (ranging from O-acetyl-(R)-carnitine to long-chain O-acyl-(R)-carnitines) with free carnitine ((R)-carnitine or L-carnitine) across the mitochondrial inner membrane, via a ping-pong mechanism. Key player in the mitochondrial oxidation pathway, it translocates the fatty acids in the form of acylcarnitines into the mitochondrial matrix, where the carnitine palmitoyltransferase 2 (CPT-2) activates them to undergo fatty acid beta-oxidation. Catalyzes the unidirectional transport (uniport) of carnitine at lower rates than the antiport (exchange). This Homo sapiens (Human) protein is Mitochondrial carnitine/acylcarnitine carrier protein.